The chain runs to 218 residues: Thiamine-phosphate synthase (218 aa).

4-amino-2-methyl-5-(diphosphooxymethyl)pyrimidine-binding positions include 43 to 47 and Asn75; that span reads QLRMK. Mg(2+) is bound by residues Asp76 and Asp95. Residue Thr114 participates in 4-amino-2-methyl-5-(diphosphooxymethyl)pyrimidine binding. 140 to 142 serves as a coordination point for 2-[(2R,5Z)-2-carboxy-4-methylthiazol-5(2H)-ylidene]ethyl phosphate; that stretch reads TST. Lys143 contributes to the 4-amino-2-methyl-5-(diphosphooxymethyl)pyrimidine binding site. Residues Gly171 and 191-192 contribute to the 2-[(2R,5Z)-2-carboxy-4-methylthiazol-5(2H)-ylidene]ethyl phosphate site; that span reads VS.

Belongs to the thiamine-phosphate synthase family. Mg(2+) serves as cofactor.

It catalyses the reaction 2-[(2R,5Z)-2-carboxy-4-methylthiazol-5(2H)-ylidene]ethyl phosphate + 4-amino-2-methyl-5-(diphosphooxymethyl)pyrimidine + 2 H(+) = thiamine phosphate + CO2 + diphosphate. The catalysed reaction is 2-(2-carboxy-4-methylthiazol-5-yl)ethyl phosphate + 4-amino-2-methyl-5-(diphosphooxymethyl)pyrimidine + 2 H(+) = thiamine phosphate + CO2 + diphosphate. The enzyme catalyses 4-methyl-5-(2-phosphooxyethyl)-thiazole + 4-amino-2-methyl-5-(diphosphooxymethyl)pyrimidine + H(+) = thiamine phosphate + diphosphate. It functions in the pathway cofactor biosynthesis; thiamine diphosphate biosynthesis; thiamine phosphate from 4-amino-2-methyl-5-diphosphomethylpyrimidine and 4-methyl-5-(2-phosphoethyl)-thiazole: step 1/1. Functionally, condenses 4-methyl-5-(beta-hydroxyethyl)thiazole monophosphate (THZ-P) and 2-methyl-4-amino-5-hydroxymethyl pyrimidine pyrophosphate (HMP-PP) to form thiamine monophosphate (TMP). In Myxococcus xanthus (strain DK1622), this protein is Thiamine-phosphate synthase.